We begin with the raw amino-acid sequence, 156 residues long: Small ribosomal subunit protein uS7 (156 aa).

It belongs to the universal ribosomal protein uS7 family. Part of the 30S ribosomal subunit. Contacts proteins S9 and S11.

Its function is as follows. One of the primary rRNA binding proteins, it binds directly to 16S rRNA where it nucleates assembly of the head domain of the 30S subunit. Is located at the subunit interface close to the decoding center, probably blocks exit of the E-site tRNA. This is Small ribosomal subunit protein uS7 from Syntrophobacter fumaroxidans (strain DSM 10017 / MPOB).